The following is a 361-amino-acid chain: Probable pectinesterase 49 (361 aa).

The N-terminal stretch at 1-22 (MGYISLALVALLVFFASPVVLA) is a signal peptide. An N-linked (GlcNAc...) asparagine glycan is attached at asparagine 128. Glutamine 174 serves as a coordination point for substrate. Aspartate 197 serves as the catalytic Proton donor. Aspartate 218 acts as the Nucleophile in catalysis. Substrate contacts are provided by arginine 275 and tryptophan 277.

This sequence belongs to the pectinesterase family. As to expression, expressed in flower buds.

The protein resides in the secreted. Its subcellular location is the cell wall. It catalyses the reaction [(1-&gt;4)-alpha-D-galacturonosyl methyl ester](n) + n H2O = [(1-&gt;4)-alpha-D-galacturonosyl](n) + n methanol + n H(+). The protein operates within glycan metabolism; pectin degradation; 2-dehydro-3-deoxy-D-gluconate from pectin: step 1/5. In terms of biological role, acts in the modification of cell walls via demethylesterification of cell wall pectin. The protein is Probable pectinesterase 49 (PME49) of Arabidopsis thaliana (Mouse-ear cress).